The primary structure comprises 430 residues: Phosphomethylpyrimidine synthase (430 aa).

Substrate is bound by residues asparagine 67, methionine 96, tyrosine 125, histidine 161, 183-185 (SRG), 224-227 (DALR), and glutamate 263. Histidine 267 lines the Zn(2+) pocket. Tyrosine 290 is a binding site for substrate. Histidine 331 is a binding site for Zn(2+). [4Fe-4S] cluster contacts are provided by cysteine 406, cysteine 409, and cysteine 413.

Belongs to the ThiC family. Homodimer. [4Fe-4S] cluster is required as a cofactor.

The enzyme catalyses 5-amino-1-(5-phospho-beta-D-ribosyl)imidazole + S-adenosyl-L-methionine = 4-amino-2-methyl-5-(phosphooxymethyl)pyrimidine + CO + 5'-deoxyadenosine + formate + L-methionine + 3 H(+). It functions in the pathway cofactor biosynthesis; thiamine diphosphate biosynthesis. Functionally, catalyzes the synthesis of the hydroxymethylpyrimidine phosphate (HMP-P) moiety of thiamine from aminoimidazole ribotide (AIR) in a radical S-adenosyl-L-methionine (SAM)-dependent reaction. This Campylobacter jejuni subsp. jejuni serotype O:23/36 (strain 81-176) protein is Phosphomethylpyrimidine synthase.